Here is a 277-residue protein sequence, read N- to C-terminus: Indole-3-glycerol phosphate synthase (277 aa).

Belongs to the TrpC family.

It catalyses the reaction 1-(2-carboxyphenylamino)-1-deoxy-D-ribulose 5-phosphate + H(+) = (1S,2R)-1-C-(indol-3-yl)glycerol 3-phosphate + CO2 + H2O. It functions in the pathway amino-acid biosynthesis; L-tryptophan biosynthesis; L-tryptophan from chorismate: step 4/5. This is Indole-3-glycerol phosphate synthase from Pseudomonas putida (strain W619).